Here is a 438-residue protein sequence, read N- to C-terminus: Chromosomal replication initiator protein DnaA (438 aa).

The tract at residues 1–71 is domain I, interacts with DnaA modulators; it reads MTELDSLWEA…VEIVYQRTGQ (71 aa). Residues 71–101 are domain II; it reads QEIRPDYVLATDPTPLAQTPPRPQSTFKEET. The interval 81–100 is disordered; sequence TDPTPLAQTPPRPQSTFKEE. The tract at residues 102–318 is domain III, AAA+ region; that stretch reads PLNPEYTFQT…GALMRIRVFS (217 aa). ATP is bound by residues G146, G148, K149, and T150. Residues 319 to 438 form a domain IV, binds dsDNA region; the sequence is ELHQQPITLK…LVKLKNDLQA (120 aa).

It belongs to the DnaA family. In terms of assembly, oligomerizes as a right-handed, spiral filament on DNA at oriC.

It localises to the cytoplasm. Plays an essential role in the initiation and regulation of chromosomal replication. ATP-DnaA binds to the origin of replication (oriC) to initiate formation of the DNA replication initiation complex once per cell cycle. Binds the DnaA box (a 9 base pair repeat at the origin) and separates the double-stranded (ds)DNA. Forms a right-handed helical filament on oriC DNA; dsDNA binds to the exterior of the filament while single-stranded (ss)DNA is stabiized in the filament's interior. The ATP-DnaA-oriC complex binds and stabilizes one strand of the AT-rich DNA unwinding element (DUE), permitting loading of DNA polymerase. After initiation quickly degrades to an ADP-DnaA complex that is not apt for DNA replication. Binds acidic phospholipids. This Limosilactobacillus fermentum (strain NBRC 3956 / LMG 18251) (Lactobacillus fermentum) protein is Chromosomal replication initiator protein DnaA.